Consider the following 228-residue polypeptide: Small ribosomal subunit protein uS2c (228 aa).

Belongs to the universal ribosomal protein uS2 family.

It is found in the plastid. It localises to the chloroplast. In Mesostigma viride (Green alga), this protein is Small ribosomal subunit protein uS2c (rps2).